The following is a 367-amino-acid chain: Developmentally-regulated GTP-binding protein 1 (367 aa).

Positions 2-16 are required for interaction with STK16; the sequence is SGTLARIAEIEAEMA. The 226-residue stretch at 65–290 folds into the OBG-type G domain; it reads ARIGFVGFPS…LLEKIWDYLQ (226 aa). Residues 71–78, 96–100, 117–120, 248–251, and 271–273 contribute to the GTP site; these read GFPSVGKS, FTTLT, DLPG, NKID, and SAH. The Mg(2+) site is built by serine 78 and threonine 98. A TGS domain is found at 290–366; that stretch reads QLVRIYTKPK…EDEDVIQIVK (77 aa).

Belongs to the TRAFAC class OBG-HflX-like GTPase superfamily. OBG GTPase family. Mg(2+) is required as a cofactor. Requires K(+) as cofactor. As to expression, expressed in many adult amd embryonic tissues. In adults, highest levels in ovaries and testes, followed by skeletal muscle, stomach, brain, kidney and liver. Weak expression in heart and brain.

The protein localises to the nucleus. Its subcellular location is the cytoplasm. It carries out the reaction GTP + H2O = GDP + phosphate + H(+). Catalyzes the conversion of GTP to GDP through hydrolysis of the gamma-phosphate bond in GTP. Binds to microtubules and promotes microtubule polymerization and bundling. GTPase activity is not necessary for these microtubule-related functions. This is Developmentally-regulated GTP-binding protein 1 (drg1) from Xenopus laevis (African clawed frog).